Reading from the N-terminus, the 182-residue chain is MNKLSTKLVVAIGIGAALYGILGLWGFSIAPNTFIKPALAILTVFGALFGPVAGLLIGLIGHTVTDTIAGWGIWWGWVISSGIIGFAMGLIQKRVGFSVKNGTYNKGDISYLAITGLIGIVIAIIFAGAFDIIVMGEPFDKIVIQVLGATIADVIVFLVLGLPITIGLAKSNKKHTQLKIEK.

The next 5 membrane-spanning stretches (helical) occupy residues 9–29 (VVAIGIGAALYGILGLWGFSI), 40–60 (AILTVFGALFGPVAGLLIGLI), 71–91 (WGIWWGWVISSGIIGFAMGLI), 114–134 (ITGLIGIVIAIIFAGAFDIIV), and 142–162 (IVIQVLGATIADVIVFLVLGL).

Belongs to the UPF0397 family.

The protein localises to the cell membrane. This is UPF0397 protein BCA_2731 from Bacillus cereus (strain 03BB102).